The chain runs to 1327 residues: Kinectin (1327 aa).

The Cytoplasmic portion of the chain corresponds to 1–8 (MELYESTY). The helical; Signal-anchor for type II membrane protein transmembrane segment at 9–29 (FIVLIPSVVITVIFLFFWLFM) threads the bilayer. Residues 30 to 1327 (KETLYDEVLA…EVNQQLTKET (1298 aa)) are Lumenal-facing. Disordered regions lie at residues 49 to 181 (STKT…EQDK) and 197 to 216 (LSHQ…GLSK). Asn69 is a glycosylation site (N-linked (GlcNAc...) asparagine). Composition is skewed to basic and acidic residues over residues 73–86 (RESD…DFKL) and 111–135 (VRER…ESDA). 2 positions are modified to phosphoserine: Ser75 and Ser77. Positions 163–173 (LKKKAGQKKSK) are enriched in basic residues. Residues 329-1327 (ELSGLLHQLQ…EVNQQLTKET (999 aa)) are a coiled coil. Asn1031 carries N-linked (GlcNAc...) asparagine glycosylation. Ser1060 is subject to Phosphoserine. An N-linked (GlcNAc...) asparagine glycan is attached at Asn1066. The residue at position 1290 (Ser1290) is a Phosphoserine.

It belongs to the kinectin family. As to expression, expressed in all tissues examined including 12-day embryo, adult heart, brain, ovary, kidney, lung, small intestine, spleen, thymus and pancreas.

It is found in the endoplasmic reticulum membrane. Receptor for kinesin thus involved in kinesin-driven vesicle motility. Accumulates in integrin-based adhesion complexes (IAC) upon integrin aggregation by fibronectin. The sequence is that of Kinectin from Mus musculus (Mouse).